Here is a 381-residue protein sequence, read N- to C-terminus: MNYTLSTVSSATMYNSSSNITTIATTIISTILSTISTNQNNVTTPSTYENTTTISNYTTAYNTTYYSDDYDDYEVSIVDIPHCDDGVDTTSFGLITLYSTIFFLGLFGNIIVLTVLRKYKIKTIQDMFLLNLTLSDLIFVLVFPFNLYDSIAKQWSLGDCLCKFKAMFYFVGFYNSMSFITLMSIDRYLAVVHPVKSMPIRTKRYGIVLSMVVWIVSTIESFPIMLFYETKKVYGITYCHVFYNDNAKIWKLFINFEINIFGMIIPLTILLYCYYKILNTLKTSQTKNKKAIKMVFLIVICSVLFLLPFSVTVFVSSLYLLNVFSGCMALRFVNLAVHVAEIVSLCHCFINPLIYAFCSREFTKKLLRLRTTSSAGSISIG.

Topologically, residues 1–91 are extracellular; it reads MNYTLSTVSS…HCDDGVDTTS (91 aa). N-linked (GlcNAc...) asparagine; by host glycosylation is found at Asn-2, Asn-15, Asn-19, Asn-41, Asn-50, Asn-56, and Asn-62. Residues 92–112 traverse the membrane as a helical segment; sequence FGLITLYSTIFFLGLFGNIIV. The Cytoplasmic portion of the chain corresponds to 113–126; the sequence is LTVLRKYKIKTIQD. Residues 127–147 form a helical membrane-spanning segment; sequence MFLLNLTLSDLIFVLVFPFNL. Residues 148–165 lie on the Extracellular side of the membrane; sequence YDSIAKQWSLGDCLCKFK. A helical membrane pass occupies residues 166–186; the sequence is AMFYFVGFYNSMSFITLMSID. The Cytoplasmic portion of the chain corresponds to 187-206; the sequence is RYLAVVHPVKSMPIRTKRYG. A helical transmembrane segment spans residues 207 to 227; it reads IVLSMVVWIVSTIESFPIMLF. Residues 228-251 are Extracellular-facing; the sequence is YETKKVYGITYCHVFYNDNAKIWK. Residues 252–272 form a helical membrane-spanning segment; that stretch reads LFINFEINIFGMIIPLTILLY. Topologically, residues 273 to 294 are cytoplasmic; it reads CYYKILNTLKTSQTKNKKAIKM. A helical membrane pass occupies residues 295-315; sequence VFLIVICSVLFLLPFSVTVFV. Topologically, residues 316-336 are extracellular; that stretch reads SSLYLLNVFSGCMALRFVNLA. Residues 337–357 form a helical membrane-spanning segment; that stretch reads VHVAEIVSLCHCFINPLIYAF. Topologically, residues 358–381 are cytoplasmic; that stretch reads CSREFTKKLLRLRTTSSAGSISIG.

This sequence belongs to the G-protein coupled receptor 1 family.

It localises to the host cell membrane. Its function is as follows. Putative chemokine receptor. This Ovis aries (Sheep) protein is G-protein coupled receptor homolog Q2/3L.